The chain runs to 528 residues: MHHTIKHLLETTLGFSVVLEKPKDKNHGHYATPAAFSLAKELKKNPALIAQELSKKLSEIEVFESVQSVGGYINFRLKQGFLDAQASLALSQGREFGKGDKQGSILLEYVSANPTGPLHIGHARGAVLGDALSRIGRHLGYALETEYYVNDAGNQIHLLGLSIYLAGRDSLLSLPVTYPEQYYRGEYIVDIAKEALKKWGEKAFADEAFIPELSLFGKELMLEEIRSNLADTHIHFDHYVSEKSLYPRWEETYALLQSHQGCYEGGGKVWLRSSAHGDEKDRVIVRESGEPTYLAGDIIYHADKFARPYDRYINIWGADHHGYIARVKAAIEFLGHDSSKLEVLLSQMVTLLKGGQPYKMSKRAGNFILMRDVLEDIGADALRFIFLSKKPDTHLEFDVDDLNKEDSSNPIFYINYAHARIHTMLGKSSLDSQEIEAASLEGLEDSIFDLLFLSLQLPQVLEDSFENRAIQKVAEYLRALAGEFHKFYNEHKILETPQEAALLKVCKVVALSLSQGLALLGITAKERM.

A 'HIGH' region motif is present at residues 112-122 (ANPTGPLHIGH).

The protein belongs to the class-I aminoacyl-tRNA synthetase family. Monomer.

Its subcellular location is the cytoplasm. The enzyme catalyses tRNA(Arg) + L-arginine + ATP = L-arginyl-tRNA(Arg) + AMP + diphosphate. The polypeptide is Arginine--tRNA ligase (Wolinella succinogenes (strain ATCC 29543 / DSM 1740 / CCUG 13145 / JCM 31913 / LMG 7466 / NCTC 11488 / FDC 602W) (Vibrio succinogenes)).